Here is a 650-residue protein sequence, read N- to C-terminus: Kinesin-like protein KIF22-B (650 aa).

Positions 31–359 constitute a Kinesin motor domain; sequence RVRVAVRLRP…LNFAAKSKQI (329 aa). 116–123 provides a ligand contact to ATP; that stretch reads GPTGAGKT. The tract at residues 365-416 is disordered; the sequence is SRETTQTVAQPAMKRPREEAEATTSSRQRKKSKTDSTESSPNSSMESTGKRK. Low complexity predominate over residues 401–411; it reads TESSPNSSMES. A coiled-coil region spans residues 452 to 498; sequence KRERMALLKKWEESQMEIERLKEKQKELEQKAMEAEARLEKSNNSDL. Positions 560 to 563 match the Important for regulated proteolytic degradation motif; that stretch reads GHEN.

It belongs to the TRAFAC class myosin-kinesin ATPase superfamily. Kinesin family. Ubiquitinated, leading to its subsequent proteasomal degradation.

The protein localises to the nucleus. It is found in the cytoplasm. The protein resides in the cytoskeleton. Kinesin family member that is involved in spindle formation and the movements of chromosomes during mitosis and meiosis. Binds to microtubules and to DNA. The chain is Kinesin-like protein KIF22-B (kif22-b) from Xenopus laevis (African clawed frog).